An 871-amino-acid chain; its full sequence is MQPAATTCTEDRIQHALERCLHGLSLGRRSAPWSAGLCLNCWSLQELVSRDPGHFLILLEQILQKTQEVQEKGTYDLLAPLALLFYSTVLCTPHFPPDSDLLLKAASTYHCFLTWPVPYCSICREMLTFIDAELKAPGISYQRLVRAEQGLPVRSHRSSTVTVLLLNPVEVQAEFLAVADKLSTPGQSPHGTYTTLLLHAFQATFGAHCDLPKLHRKLQSKTIEELEDIFTETTEAQELASGIGDVAEAREWLRTKLQAVGEKAGFPGILDTASPGKLHTIPIPVARCYTYSWNQDSFDILQEVLLKEQELLQPGILGDDEEEEEEDLEMDRHCAERDSLLSTSSLVSHDSTLLLTSSQASEPVLSRQMLTTFVSGLSDGMDSGYVEDSEENSEWPQKPGSQKRQGHRRPGQKFNRFYKLLKSTSQLVLRRDSRSLESSVDPTLPLRRAGSLCSPLDCPAQLPSRAQRSRSLPQAKLTTQLPRWLLAPPSHHQRRRPFLSGDEDPKASTLRVVVFGSDRISGKVARAYSKLRRLETSHPILTRFFKLQFFYVPVKRSHGTSPSACPSSLSQASPLPADSLKYPSPTDLGMAPWEDSTNDISHYLGMLDPWYERNVLGLMHLPPEVLCQQSLKADSRPLEGSATQLPILADMLLYYCRFAARPVLLQVYQTELTFVTGEKTTEIFIQSLELGHSATTRAIKASGRGRKRLGIDDDREAVPLTLQIIYSKGAISGRSRWSNLEKVCTSVNLSKACQKPEELDSSMEALTLTLTEVVKRQNPKSKKGFNQISTSYIKVDKVQIIGSSSCPFAVCLDQDERKILQSVVRCEVSPCYKPEKSSLPPERSFSQPAETGSDLCSLLCLPIMTFSGALP.

M1 is subject to N-acetylmethionine. The heterodimerization stretch occupies residues 25 to 101; the sequence is SLGRRSAPWS…TPHFPPDSDL (77 aa). The disordered stretch occupies residues 381-413; that stretch reads MDSGYVEDSEENSEWPQKPGSQKRQGHRRPGQK. 2 positions are modified to phosphoserine: S451 and S500. Residues 646 to 746 form an interaction with beta-gamma G protein dimers region; that stretch reads PILADMLLYY…WSNLEKVCTS (101 aa).

As to quaternary structure, heterodimer of a catalytic subunit (PIK3CG/p120) and a regulatory (PIK3R5a/p101) subunit. Interacts with beta-gamma G protein dimers.

The protein resides in the nucleus. It is found in the cytoplasm. The protein localises to the cell membrane. With respect to regulation, greatly activated by G gamma proteins. Its function is as follows. Regulatory subunit of the PI3K gamma complex. Required for recruitment of the catalytic subunit to the plasma membrane via interaction with beta-gamma G protein dimers. Required for G protein-mediated activation of PIK3CG. The chain is Phosphoinositide 3-kinase regulatory subunit 5 (Pik3r5) from Mus musculus (Mouse).